The sequence spans 520 residues: Dihydropyrimidinase 2 (520 aa).

Zn(2+)-binding residues include His59, His61, and Lys152. Lys152 is modified (N6-carboxylysine). Tyr157 provides a ligand contact to substrate. Zn(2+) is bound by residues His185 and His241. Ser291 serves as a coordination point for substrate. Asp319 provides a ligand contact to Zn(2+). Asn340 contributes to the substrate binding site.

It belongs to the metallo-dependent hydrolases superfamily. Hydantoinase/dihydropyrimidinase family. As to quaternary structure, homotetramer. Zn(2+) is required as a cofactor. Carboxylation allows a single lysine to coordinate two zinc ions. As to expression, body wall muscles.

The catalysed reaction is 5,6-dihydrouracil + H2O = 3-(carbamoylamino)propanoate + H(+). The chain is Dihydropyrimidinase 2 (dhp-2) from Caenorhabditis elegans.